The primary structure comprises 434 residues: Maltoporin (434 aa).

The N-terminal stretch at 1-25 (MMTTLRKLPLALAIAAGVLTTQAMA) is a signal peptide.

This sequence belongs to the porin LamB (TC 1.B.3) family. Homotrimer formed of three 18-stranded antiparallel beta-barrels, containing three independent channels.

The protein resides in the cell outer membrane. The enzyme catalyses beta-maltose(in) = beta-maltose(out). In terms of biological role, involved in the transport of maltose and maltodextrins. This is Maltoporin from Serratia proteamaculans (strain 568).